The sequence spans 276 residues: S-adenosylmethionine-dependent nucleotide dehydratase (276 aa).

The 211-residue stretch at 6–216 (TSVRKFRSAN…RRRHEDIGCI (211 aa)) folds into the Radical SAM core domain. [4Fe-4S] cluster is bound by residues Cys-22, Cys-26, and Cys-29.

Belongs to the radical SAM superfamily. Viperin family. [4Fe-4S] cluster is required as a cofactor.

It catalyses the reaction CTP + AH2 + S-adenosyl-L-methionine = 3'-deoxy-3',4'-didehydro-CTP + 5'-deoxyadenosine + L-methionine + A + H2O + H(+). Its function is as follows. Expression of pVip50 in E.coli (strain MG1655) confers resistance to phage P1; has no effect against T7. Catalyzes the conversion of cytosine triphosphate (CTP) to 3'-deoxy-3',4'-didehydro-CTP (ddhCTP), probably via a SAM-dependent radical mechanism. The modified nucleotide represses transcription from T7 RNA polymerase-directed genes (possibly by acting as chain terminators), strongly suggesting these nucleotides block viral polymerase transcription. How this protein allows bacteria to resist viruses that do not encode their own RNA polymerase (such as lambda, P1) is unknown. The chain is S-adenosylmethionine-dependent nucleotide dehydratase from Thermoplasmatales archaeon (strain ISO4-H5).